The chain runs to 887 residues: Semaphorin-6B (887 aa).

The first 26 residues, 1–26 (MWTPRAPPPRPALLFLLLLLLRVTHG), serve as a signal peptide directing secretion. The Extracellular segment spans residues 27 to 605 (LFPDEPPPLS…VSVNLLVTSS (579 aa)). Positions 32–525 (PPPLSVAPRD…FPRCVVRVPV (494 aa)) constitute a Sema domain. The N-linked (GlcNAc...) asparagine glycan is linked to Asn75. 2 cysteine pairs are disulfide-bonded: Cys117-Cys127 and Cys145-Cys154. Asn156, Asn168, and Asn292 each carry an N-linked (GlcNAc...) asparagine glycan. 2 cysteine pairs are disulfide-bonded: Cys268/Cys379 and Cys293/Cys338. N-linked (GlcNAc...) asparagine glycosylation is found at Asn387, Asn442, and Asn463. Cystine bridges form between Cys487–Cys519, Cys528–Cys546, Cys534–Cys580, and Cys538–Cys554. A helical transmembrane segment spans residues 606–626 (VAAFVVGAVVSGFSVGWFVGL). At 627 to 887 (RERRELARRK…TGERTAPPVP (261 aa)) the chain is on the cytoplasmic side. Disordered regions lie at residues 656-675 (LGERRGTGTGGRGGAGGGPG), 697-717 (HGGPHDLDSGLLPTPEQTPLP), and 759-887 (APEQ…PPVP). The span at 662–674 (TGTGGRGGAGGGP) shows a compositional bias: gly residues. Arg667 carries the omega-N-methylarginine modification. Positions 707 to 717 (LLPTPEQTPLP) are enriched in low complexity.

It belongs to the semaphorin family.

The protein localises to the cell membrane. Functions as a cell surface repellent for mossy fibers of developing neurons in the hippocampus where it plays a role in axon guidance. May function through the PLXNA4 receptor expressed by mossy cell axons. This chain is Semaphorin-6B (Sema6b), found in Rattus norvegicus (Rat).